Consider the following 1849-residue polypeptide: Mitogen-activated protein kinase kinase kinase mkh1 (1849 aa).

Residues 1556–1825 (WFKGQLIGKG…TKLLAEHPFC (270 aa)) enclose the Protein kinase domain. Residues 1562-1570 (IGKGTYGRV) and lysine 1585 each bind ATP. Catalysis depends on aspartate 1686, which acts as the Proton acceptor.

Belongs to the protein kinase superfamily. STE Ser/Thr protein kinase family. MAP kinase kinase kinase subfamily.

The enzyme catalyses L-seryl-[protein] + ATP = O-phospho-L-seryl-[protein] + ADP + H(+). It catalyses the reaction L-threonyl-[protein] + ATP = O-phospho-L-threonyl-[protein] + ADP + H(+). Its function is as follows. Mitogen-activated protein kinase kinase kinase, part of the mkh1-mkk1-spm1 MAPK cascade that regulates vegetative growth, conidial formation, colony surface hydrophobicity, osmotic stress, cell wall integrity maintenance, carbon and nitrogen source utilization, chitin distribution, septa formation, and pathogenicity. The chain is Mitogen-activated protein kinase kinase kinase mkh1 from Cytospora mali (Apple Valsa canker fungus).